We begin with the raw amino-acid sequence, 865 residues long: Nicotinate catabolism cluster-specific transcription factor (865 aa).

2 C2H2-type zinc fingers span residues 8–32 (HACT…SLNH) and 41–63 (YTCQ…LDRH). Residues 74 to 168 (GKGVLETRKR…SIDDDGTDPD (95 aa)) form a disordered region. The Nuclear localization signal(NLS) signature appears at 77–87 (VLETRKRMRRA). Residues 78-89 (LETRKRMRRAED) are compositionally biased toward basic and acidic residues. The span at 96 to 105 (PPKRPSRHQQ) shows a compositional bias: basic residues. Residues 108 to 132 (GPPVGAPLSSSGSVSAGSGRSSRSP) show a composition bias toward low complexity. The short motif at 285-289 (LDIDL) is the Nuclear export signal (NES) element.

The protein resides in the nucleus. Its function is as follows. Transcription factor that specifically regulates the expression of the hxn gene cluster that mediates the degradation of nicotinate and related metabolites. The chain is Nicotinate catabolism cluster-specific transcription factor from Emericella nidulans (strain FGSC A4 / ATCC 38163 / CBS 112.46 / NRRL 194 / M139) (Aspergillus nidulans).